Here is a 270-residue protein sequence, read N- to C-terminus: Pantoate kinase (270 aa).

The protein belongs to the GHMP kinase family. PoK subfamily.

It catalyses the reaction (R)-pantoate + ATP = (R)-4-phosphopantoate + ADP + H(+). It functions in the pathway cofactor biosynthesis; coenzyme A biosynthesis. Phosphorylates (R)-pantoate to form (R)-4-phosphopantoate in the CoA biosynthesis pathway. This chain is Pantoate kinase, found in Methanocaldococcus jannaschii (strain ATCC 43067 / DSM 2661 / JAL-1 / JCM 10045 / NBRC 100440) (Methanococcus jannaschii).